The following is a 279-amino-acid chain: Ribosomal RNA small subunit methyltransferase A (279 aa).

S-adenosyl-L-methionine contacts are provided by N28, L30, G55, E77, D103, and N122.

This sequence belongs to the class I-like SAM-binding methyltransferase superfamily. rRNA adenine N(6)-methyltransferase family. RsmA subfamily.

The protein localises to the cytoplasm. The enzyme catalyses adenosine(1518)/adenosine(1519) in 16S rRNA + 4 S-adenosyl-L-methionine = N(6)-dimethyladenosine(1518)/N(6)-dimethyladenosine(1519) in 16S rRNA + 4 S-adenosyl-L-homocysteine + 4 H(+). Its function is as follows. Specifically dimethylates two adjacent adenosines (A1518 and A1519) in the loop of a conserved hairpin near the 3'-end of 16S rRNA in the 30S particle. May play a critical role in biogenesis of 30S subunits. The sequence is that of Ribosomal RNA small subunit methyltransferase A from Ruegeria pomeroyi (strain ATCC 700808 / DSM 15171 / DSS-3) (Silicibacter pomeroyi).